The chain runs to 259 residues: Envelope biogenesis factor ElyC (259 aa).

A run of 2 helical transmembrane segments spans residues 12–32 (MLLP…LLWF) and 39–59 (GKIF…QPVA).

The protein resides in the cell inner membrane. Plays a critical role in the metabolism of the essential lipid carrier used for cell wall synthesis. This is Envelope biogenesis factor ElyC (elyC) from Escherichia coli O157:H7.